A 394-amino-acid polypeptide reads, in one-letter code: Ornithine aminotransferase 1 (394 aa).

Lys252 is subject to N6-(pyridoxal phosphate)lysine.

Belongs to the class-III pyridoxal-phosphate-dependent aminotransferase family. OAT subfamily. It depends on pyridoxal 5'-phosphate as a cofactor.

The protein localises to the cytoplasm. It carries out the reaction a 2-oxocarboxylate + L-ornithine = L-glutamate 5-semialdehyde + an L-alpha-amino acid. The protein operates within amino-acid biosynthesis; L-proline biosynthesis; L-glutamate 5-semialdehyde from L-ornithine: step 1/1. Its function is as follows. Catalyzes the interconversion of ornithine to glutamate semialdehyde. In Staphylococcus saprophyticus subsp. saprophyticus (strain ATCC 15305 / DSM 20229 / NCIMB 8711 / NCTC 7292 / S-41), this protein is Ornithine aminotransferase 1.